A 185-amino-acid chain; its full sequence is Anaphase-promoting complex subunit 10 (185 aa).

An N-acetylthreonine modification is found at threonine 2. The 184-residue stretch at 2 to 185 (TTPNKTPPGA…IDFMMYRSIR (184 aa)) folds into the DOC domain. N6-acetyllysine is present on lysine 169.

This sequence belongs to the APC10 family. As to quaternary structure, the mammalian APC/C is composed at least of 14 distinct subunits ANAPC1, ANAPC2, CDC27/APC3, ANAPC4, ANAPC5, CDC16/APC6, ANAPC7, CDC23/APC8, ANAPC10, ANAPC11, CDC26/APC12, ANAPC13, ANAPC15 and ANAPC16 that assemble into a complex of at least 19 chains with a combined molecular mass of around 1.2 MDa; APC/C interacts with FZR1 and FBXO5. The C-terminus of APC10 binds to CDC27/APC3. Interacts with PIWIL1; interaction only takes place when PIWIL1 binds piRNA. Interacts with FBXO43; the interaction is direct.

The protein operates within protein modification; protein ubiquitination. Its function is as follows. Component of the anaphase promoting complex/cyclosome (APC/C), a cell cycle-regulated E3 ubiquitin ligase that controls progression through mitosis and the G1 phase of the cell cycle. The APC/C complex acts by mediating ubiquitination and subsequent degradation of target proteins: it mainly mediates the formation of 'Lys-11'-linked polyubiquitin chains and, to a lower extent, the formation of 'Lys-48'- and 'Lys-63'-linked polyubiquitin chains. The APC/C complex catalyzes assembly of branched 'Lys-11'-/'Lys-48'-linked branched ubiquitin chains on target proteins. This chain is Anaphase-promoting complex subunit 10 (ANAPC10), found in Bos taurus (Bovine).